The following is a 473-amino-acid chain: MKVELVFIPSPGVGHIRATTALAKLLVASDNRLSVTLIVIPSRVSDDASSSVYTNSEDRLRYILLPARDQTTDLVSYIDSQKPQVRAVVSKVAGDVSTRSDSRLAGIVVDMFCTSMIDIADEFNLSAYIFYTSNASYLGLQFHVQSLYDEKELDVSEFKDTEMKFDVPTLTQPFPAKCLPSVMLNKKWFPYVLGRARSFRATKGILVNSVADMEPQALSFFSGGNGNTNIPPVYAVGPIMDLESSGDEEKRKEILHWLKEQPTKSVVFLCFGSMGGFSEEQAREIAVALERSGHRFLWSLRRASPVGNKSNPPPGEFTNLEEILPKGFLDRTVEIGKIISWAPQVDVLNSPAIGAFVTHCGWNSILESLWFGVPMAAWPIYAEQQFNAFHMVDELGLAAEVKKEYRRDFLVEEPEIVTADEIERGIKCAMEQDSKMRKRVMEMKDKLHVALVDGGSSNCALKKFVQDVVDNVP.

Residue histidine 15 is the Proton acceptor of the active site. Histidine 15 contacts an anthocyanidin. Catalysis depends on aspartate 110, which acts as the Charge relay. Positions 132, 342, 344, 359, 362, 363, 364, and 367 each coordinate UDP-alpha-D-glucose. Alanine 382 contacts an anthocyanidin. UDP-alpha-D-glucose-binding residues include glutamate 383 and glutamine 384.

This sequence belongs to the UDP-glycosyltransferase family.

It carries out the reaction a flavonol + UDP-alpha-D-glucose = a flavonol 3-O-beta-D-glucoside + UDP + H(+). Possesses quercetin 3-O-glucosyltransferase activity in vitro. Also active in vitro on benzoates and benzoate derivatives. This chain is UDP-glycosyltransferase 71B1 (UGT71B1), found in Arabidopsis thaliana (Mouse-ear cress).